The following is a 461-amino-acid chain: Protein KlcB (461 aa).

Disordered stretches follow at residues 84–107 (PEAT…TEDK) and 349–379 (RAKA…EDAP). The segment covering 91–101 (ARRRTKARKSK) has biased composition (basic residues). The span at 357–377 (GQRREPVTPAKPEPEPAKDED) shows a compositional bias: basic and acidic residues.

The polypeptide is Protein KlcB (klcB) (Escherichia coli).